A 166-amino-acid chain; its full sequence is NAD(P)H-quinone oxidoreductase subunit I, chloroplastic (166 aa).

4Fe-4S ferredoxin-type domains lie at 55–84 and 95–124; these read GRIH…VDWK and LNYS…MTEE. The [4Fe-4S] cluster site is built by C64, C67, C70, C74, C104, C107, C110, and C114.

The protein belongs to the complex I 23 kDa subunit family. As to quaternary structure, NDH is composed of at least 16 different subunits, 5 of which are encoded in the nucleus. It depends on [4Fe-4S] cluster as a cofactor.

The protein localises to the plastid. It localises to the chloroplast thylakoid membrane. It catalyses the reaction a plastoquinone + NADH + (n+1) H(+)(in) = a plastoquinol + NAD(+) + n H(+)(out). It carries out the reaction a plastoquinone + NADPH + (n+1) H(+)(in) = a plastoquinol + NADP(+) + n H(+)(out). NDH shuttles electrons from NAD(P)H:plastoquinone, via FMN and iron-sulfur (Fe-S) centers, to quinones in the photosynthetic chain and possibly in a chloroplast respiratory chain. The immediate electron acceptor for the enzyme in this species is believed to be plastoquinone. Couples the redox reaction to proton translocation, and thus conserves the redox energy in a proton gradient. In Tridax balbisioides (Coatbuttons), this protein is NAD(P)H-quinone oxidoreductase subunit I, chloroplastic.